We begin with the raw amino-acid sequence, 578 residues long: Rhamnogalacturonate lyase (578 aa).

The signal sequence occupies residues 1–27 (MHMNKPLQAWRTPLLTLIFVLPLTATG).

Belongs to the polysaccharide lyase 4 family.

The protein localises to the secreted. The catalysed reaction is Endotype eliminative cleavage of L-alpha-rhamnopyranosyl-(1-&gt;4)-alpha-D-galactopyranosyluronic acid bonds of rhamnogalacturonan I domains in ramified hairy regions of pectin leaving L-rhamnopyranose at the reducing end and 4-deoxy-4,5-unsaturated D-galactopyranosyluronic acid at the non-reducing end.. Its function is as follows. Degrades the rhamnogalacturonan I (RG-I) backbone of pectin. Is required for the full virulence of E.chrysanthemi strain 3937 as it is involved in rotting of plant tissue. This chain is Rhamnogalacturonate lyase (rhiE), found in Dickeya dadantii (strain 3937) (Erwinia chrysanthemi (strain 3937)).